A 310-amino-acid chain; its full sequence is Protoheme IX farnesyltransferase 2 (310 aa).

The next 9 helical transmembrane spans lie at 21–41, 46–66, 99–119, 125–145, 153–173, 180–200, 226–246, 256–276, and 284–304; these read IWYLLVFTAFGAAVAASGIYG, IATWALMLFSVAAGSASANVL, FGLFLAGASMVMAACIALTTT, WAAAFIAFGLFNNVLVYSYML, IVLGGLCGGMPPMIGWVAVTT, GLVMGGLVFIWTPMHIWALTL, VIAVSTVAMALFSLAPLLITL, VYLATAAASGALIIALSAWVV, and AWVLFKFSSPYLAVLFIALMV.

It belongs to the UbiA prenyltransferase family. Protoheme IX farnesyltransferase subfamily.

It is found in the cell membrane. The enzyme catalyses heme b + (2E,6E)-farnesyl diphosphate + H2O = Fe(II)-heme o + diphosphate. It participates in porphyrin-containing compound metabolism; heme O biosynthesis; heme O from protoheme: step 1/1. Its function is as follows. Converts heme B (protoheme IX) to heme O by substitution of the vinyl group on carbon 2 of heme B porphyrin ring with a hydroxyethyl farnesyl side group. In Cenarchaeum symbiosum (strain A), this protein is Protoheme IX farnesyltransferase 2.